The chain runs to 494 residues: NADH-quinone oxidoreductase subunit N (494 aa).

14 helical membrane passes run 9–29 (VIPEIFLAAATCAILLIDLFL), 36–56 (LTYVLSLATLVVCAVLSLSDF), 73–93 (PMSNLLKFCTYIAVGLTLVYS), 107–127 (LGGEFYILSLFTVLGQMVMMS), 131–151 (FLIIYLGLEIMSLSLYALVAF), 166–186 (FVLGALASGFLLYGISMLYGA), 209–229 (LIFGLVFVVAGLAFKLGAVPF), 241–261 (PTAVTLMLGGAPKLAAFAITI), 278–298 (MLTILSVLSMAIGNITAIMQT), 304–324 (LAYSTISQVGFILLGLLSGVV), 339–359 (MFYVITYVLTTLGMFGVIMLL), 382–402 (FAFVTLLLMFSLAGVPPVVGF), 416–436 (GQIWLAVVAVLFSLIGAFYYL), and 469–489 (ALLALGLVPGPLMTACAAAII).

The protein belongs to the complex I subunit 2 family. NDH-1 is composed of 14 different subunits. Subunits NuoA, H, J, K, L, M, N constitute the membrane sector of the complex.

It localises to the cell inner membrane. It carries out the reaction a quinone + NADH + 5 H(+)(in) = a quinol + NAD(+) + 4 H(+)(out). Functionally, NDH-1 shuttles electrons from NADH, via FMN and iron-sulfur (Fe-S) centers, to quinones in the respiratory chain. The immediate electron acceptor for the enzyme in this species is believed to be ubiquinone. Couples the redox reaction to proton translocation (for every two electrons transferred, four hydrogen ions are translocated across the cytoplasmic membrane), and thus conserves the redox energy in a proton gradient. This is NADH-quinone oxidoreductase subunit N from Herminiimonas arsenicoxydans.